The chain runs to 453 residues: Glutamyl-tRNA reductase (453 aa).

Substrate-binding positions include 52–55 (TCNR), serine 105, 110–112 (EDQ), and glutamine 116. Cysteine 53 acts as the Nucleophile in catalysis. Position 184 to 189 (184 to 189 (GAGEMA)) interacts with NADP(+). Over residues 413–424 (PGLEPEPTELPT) the composition is skewed to low complexity. Residues 413–453 (PGLEPEPTELPTVPDGPEGVPEELRERMSSGMLEQFSTNDD) form a disordered region.

This sequence belongs to the glutamyl-tRNA reductase family. In terms of assembly, homodimer.

It carries out the reaction (S)-4-amino-5-oxopentanoate + tRNA(Glu) + NADP(+) = L-glutamyl-tRNA(Glu) + NADPH + H(+). It functions in the pathway porphyrin-containing compound metabolism; protoporphyrin-IX biosynthesis; 5-aminolevulinate from L-glutamyl-tRNA(Glu): step 1/2. Functionally, catalyzes the NADPH-dependent reduction of glutamyl-tRNA(Glu) to glutamate 1-semialdehyde (GSA). The chain is Glutamyl-tRNA reductase from Natronomonas pharaonis (strain ATCC 35678 / DSM 2160 / CIP 103997 / JCM 8858 / NBRC 14720 / NCIMB 2260 / Gabara) (Halobacterium pharaonis).